The sequence spans 365 residues: Putative nudix hydrolase 1 (365 aa).

Positions 72–201 (VNYVAAAIIL…DFIRLVDEAV (130 aa)) constitute a Nudix hydrolase domain. The short motif at 109 to 130 (GRVEAGETIEEAVVREVKEETG) is the Nudix box element. Mg(2+) is bound by residues E124 and E128.

Belongs to the Nudix hydrolase family. It depends on Mg(2+) as a cofactor. Requires Mn(2+) as cofactor.

Functionally, probably mediates the hydrolysis of some nucleoside diphosphate derivatives. The polypeptide is Putative nudix hydrolase 1 (ndx-1) (Caenorhabditis elegans).